A 233-amino-acid polypeptide reads, in one-letter code: MAPRAHVLVAVKELHAAKTRLSSVFDTADRTGLVLSMLRDTLAVVSDVATVVGVTVVTPDPAVARLARSVGAHVYADPAPVSAEDRPDEGGTEHSLNAALSAAAEHVRRNERGVDVVALQADLPSLRGGEFGEALAAARTGGRSVVVDHHGTGTAALFSCDPEIPLDPRFGPGSAKRHLESGARPLDGHWPGLRTDVDTADDLDAAQALGVGPATRAALDALEHTDPSRCGNE.

Thr-154, Gly-171, and Ser-174 together coordinate phosphoenolpyruvate.

Belongs to the CofC family.

It catalyses the reaction phosphoenolpyruvate + GTP + H(+) = enolpyruvoyl-2-diphospho-5'-guanosine + diphosphate. The protein operates within cofactor biosynthesis; coenzyme F420 biosynthesis. Guanylyltransferase that catalyzes the activation of phosphoenolpyruvate (PEP) as enolpyruvoyl-2-diphospho-5'-guanosine, via the condensation of PEP with GTP. It is involved in the biosynthesis of coenzyme F420, a hydride carrier cofactor. The sequence is that of Phosphoenolpyruvate guanylyltransferase 1 from Rhodococcus jostii (strain RHA1).